A 423-amino-acid chain; its full sequence is MPQFGILCKTPPKVLVRQFVERFERPSGEKIALCAAELTYLCWMITHNGTAIKRATFMSYNTIISNSLSFDIVNKSLQFKYKTQKATILEASLKKLIPAWEFTIIPYYGQKHQSDITDIVSSLQLQFESSEEADKGNSHSKKMLKALLSEGESIWEITEKILNSFEYTSRFTKTKTLYQFLFLATFINCGRFSDIKNVDPKSFKLVQNKYLGVIIQCLVTETKTSVSRHIYFFSARGRIDPLVYLDEFLRNSEPVLKRVNRTGNSSSNKQEYQLLKDNLVRSYNKALKKNAPYSIFAIKNGPKSHIGRHLMTSFLSMKGLTELTNVVGNWSDKRASAVARTTYTHQITAIPDHYFALVSRYYAYDPISKEMIALKDETNPIEEWQHIEQLKGSAEGSIRYPAWNGIISQEVLDYLSSYINRRI.

Positions 136-422 constitute a Tyr recombinase Flp-type domain; that stretch reads GNSHSKKMLK…DYLSSYINRR (287 aa). Tyr-343 (O-(3'-phospho-DNA)-tyrosine intermediate) is an active-site residue.

Belongs to the 'phage' integrase family. As to quaternary structure, homotetramer.

Its function is as follows. Part of the plasmid amplification system, which corrects any decrease in copy number caused by a rare missegregation event. Catalyzes the recombination between the large inverted repetitions of the 2-micron plasmid during plasmid replication. This recombination event changes the direction of one of the two replication forks in the bidirectionally replicating molecule, effectively resulting in multiple rounds of replication from a single initiation event. Binds specifically to the FLP recognition target (FRT) site where it induces DNA to bend. Three types of bend exist. Type I is approximately 60 degrees and results from 1 FLP molecule binding to 1 symmetry element. Type II is &gt;144 degrees and results from FLP molecules binding to symmetry elements a and b. Type III is approximately 65 degrees and results from FLP molecules binding to symmetry elements b and c. The chain is Site-specific recombinase Flp (FLP1) from Saccharomyces cerevisiae (strain ATCC 204508 / S288c) (Baker's yeast).